Reading from the N-terminus, the 405-residue chain is Phosphatidylinositol 5-phosphate 4-kinase type-2 alpha (405 aa).

Ala-2 is modified (N-acetylalanine). Phosphothreonine is present on Thr-3. The residue at position 14 (Ser-14) is a Phosphoserine. The PIPK domain maps to 33-405 (ASDPLLSVLM…RFLDFIGHIL (373 aa)). Residues 59 to 65 (VMLMPDD) form a required for interaction with PIP5K1A region. N6-acetyllysine occurs at positions 89 and 145. The interval 288 to 328 (QEEVECEENDGEEEGESDSTHPIGTPPDSPGNTLNSSPPLA) is disordered. Acidic residues predominate over residues 289–304 (EEVECEENDGEEEGES).

Homodimer. Interacts with PIP4K2B; the interaction may regulate localization to the nucleus. Probably interacts with PIP5K1A; the interaction inhibits PIP5K1A kinase activity. Post-translationally, phosphorylated in tyrosines. Phosphorylation is induced by light and increases kinase activity. As to expression, detected in rod photoreceptor cells.

It is found in the cell membrane. The protein resides in the nucleus. It localises to the lysosome. Its subcellular location is the cytoplasm. The protein localises to the photoreceptor inner segment. It is found in the cell projection. The protein resides in the cilium. It localises to the photoreceptor outer segment. It carries out the reaction a 1,2-diacyl-sn-glycero-3-phospho-(1D-myo-inositol-5-phosphate) + ATP = a 1,2-diacyl-sn-glycero-3-phospho-(1D-myo-inositol-4,5-bisphosphate) + ADP + H(+). The enzyme catalyses 1,2-dihexadecanoyl-sn-glycero-3-phospho-(1D-myo-inositol-5-phosphate) + ATP = 1,2-dihexadecanoyl-sn-glycero-3-phospho-(1D-myo-inositol-4,5-bisphosphate) + ADP + H(+). It catalyses the reaction 1,2-dihexadecanoyl-sn-glycero-3-phospho-(1D-myo-inositol-5-phosphate) + GTP = 1,2-dihexadecanoyl-sn-glycero-3-phospho-(1D-myo-inositol-4,5-bisphosphate) + GDP + H(+). In rod outer segments, activated by light. Functionally, catalyzes the phosphorylation of phosphatidylinositol 5-phosphate (PtdIns5P) on the fourth hydroxyl of the myo-inositol ring, to form phosphatidylinositol 4,5-bisphosphate (PtdIns(4,5)P2). Has both ATP- and GTP-dependent kinase activities. May exert its function by regulating the levels of PtdIns5P, which functions in the cytosol by increasing AKT activity and in the nucleus signals through ING2. May regulate the pool of cytosolic PtdIns5P in response to the activation of tyrosine phosphorylation. Required for lysosome-peroxisome membrane contacts and intracellular cholesterol transport through modulating peroxisomal PtdIns(4,5)P2 level. In collaboration with PIP4K2B, has a role in mediating autophagy in times of nutrient stress. Required for autophagosome-lysosome fusion and the regulation of cellular lipid metabolism. Negatively regulates insulin signaling through a catalytic-independent mechanism. PIP4Ks interact with PIP5Ks and suppress PIP5K-mediated PtdIns(4,5)P2 synthesis and insulin-dependent conversion to PtdIns(3,4,5)P3. May be involved in thrombopoiesis, and the terminal maturation of megakaryocytes and regulation of their size. The chain is Phosphatidylinositol 5-phosphate 4-kinase type-2 alpha from Mus musculus (Mouse).